Consider the following 114-residue polypeptide: UPF0145 protein PYRAB04900 (114 aa).

It belongs to the UPF0145 family.

The polypeptide is UPF0145 protein PYRAB04900 (Pyrococcus abyssi (strain GE5 / Orsay)).